The chain runs to 389 residues: Probable dual-specificity RNA methyltransferase RlmN (389 aa).

The Proton acceptor role is filled by glutamate 114. The Radical SAM core domain occupies 120–358 (QHYGLSVCVT…CVVRQEHGTD (239 aa)). A disulfide bridge connects residues cysteine 127 and cysteine 363. [4Fe-4S] cluster contacts are provided by cysteine 134, cysteine 138, and cysteine 141. S-adenosyl-L-methionine contacts are provided by residues 186 to 187 (GE), serine 218, 241 to 243 (SLH), and asparagine 319. Catalysis depends on cysteine 363, which acts as the S-methylcysteine intermediate. The segment at 370–389 (TMKRDRQKAVAEASGKSEGK) is disordered. Residues 371–389 (MKRDRQKAVAEASGKSEGK) are compositionally biased toward basic and acidic residues.

It belongs to the radical SAM superfamily. RlmN family. Requires [4Fe-4S] cluster as cofactor.

The protein resides in the cytoplasm. The catalysed reaction is adenosine(2503) in 23S rRNA + 2 reduced [2Fe-2S]-[ferredoxin] + 2 S-adenosyl-L-methionine = 2-methyladenosine(2503) in 23S rRNA + 5'-deoxyadenosine + L-methionine + 2 oxidized [2Fe-2S]-[ferredoxin] + S-adenosyl-L-homocysteine. It catalyses the reaction adenosine(37) in tRNA + 2 reduced [2Fe-2S]-[ferredoxin] + 2 S-adenosyl-L-methionine = 2-methyladenosine(37) in tRNA + 5'-deoxyadenosine + L-methionine + 2 oxidized [2Fe-2S]-[ferredoxin] + S-adenosyl-L-homocysteine. Specifically methylates position 2 of adenine 2503 in 23S rRNA and position 2 of adenine 37 in tRNAs. This Streptococcus thermophilus (strain ATCC BAA-250 / LMG 18311) protein is Probable dual-specificity RNA methyltransferase RlmN.